We begin with the raw amino-acid sequence, 917 residues long: Hexokinase-1 (917 aa).

Residue M1 is modified to N-acetylmethionine. Residues 1–10 form a mitochondrial-binding peptide (MBP) region; it reads MIAAQLLAYY. Hexokinase domains lie at 16-458 and 464-906; these read DDQV…MVTA and AEQH…LITA. ATP contacts are provided by residues R30 and 84–89; that span reads DLGGSS. Residues 73–207 are hexokinase small subdomain 1; it reads DGSEKGDFIA…DYDANIVAVV (135 aa). 84-91 lines the D-glucose 6-phosphate pocket; sequence DLGGSSFR. D-glucose contacts are provided by residues S155, 172-173, and 208-209; these read TK and ND. Residues 208–447 form a hexokinase large subdomain 1 region; that stretch reads NDTVGTMMTC…SDVRFLLSES (240 aa). D209 and T232 together coordinate D-glucose 6-phosphate. D-glucose is bound by residues N235, E260, and 291-294; that span reads QLFE. S337 is modified (phosphoserine). An ATP-binding site is contributed by N345. Residue 413-415 coordinates D-glucose 6-phosphate; it reads DGS. Position 425 to 426 (425 to 426) interacts with ATP; the sequence is RR. Residues S449 and 532-536 contribute to the D-glucose 6-phosphate site; that span reads DLGGT. The tract at residues 521–655 is hexokinase small subdomain 2; the sequence is DGTENGDFLA…EFDLDVVAVV (135 aa). 532 to 537 contacts ATP; that stretch reads DLGGTN. D-glucose is bound by residues 603-604, 620-621, and 656-657; these read SF, TK, and ND. Residues 656–895 form a hexokinase large subdomain 2 region; sequence NDTVGTMMTC…CNVSFLLSED (240 aa). Residues D657 and T680 each coordinate D-glucose 6-phosphate. T680 provides a ligand contact to ATP. D-glucose is bound by residues 682-683, E708, and E742; that span reads SN. Residues 747–748, 784–788, and 863–867 each bind ATP; these read GM, TKFLS, and TLYKL. Residues 861 to 863 and S897 each bind D-glucose 6-phosphate; that span reads DGT.

This sequence belongs to the hexokinase family. In terms of assembly, monomer. Interacts with RABL2/RABL2A; binds preferentially to GTP-bound RABL2. Interacts with VDAC1. The HK1-VDAC1 complex interacts with ATF2. Interacts (via N-terminal spermatogenic cell-specific region) with PFKM (via C-terminus). Interacts with SMAD5.

Its subcellular location is the mitochondrion outer membrane. It localises to the cytoplasm. The protein resides in the cytosol. It catalyses the reaction a D-hexose + ATP = a D-hexose 6-phosphate + ADP + H(+). It carries out the reaction D-fructose + ATP = D-fructose 6-phosphate + ADP + H(+). The catalysed reaction is D-glucose + ATP = D-glucose 6-phosphate + ADP + H(+). The enzyme catalyses D-mannose + ATP = D-mannose 6-phosphate + ADP + H(+). It catalyses the reaction D-glucosamine + ATP = D-glucosamine 6-phosphate + ADP + H(+). The protein operates within carbohydrate metabolism; hexose metabolism. It participates in carbohydrate degradation; glycolysis; D-glyceraldehyde 3-phosphate and glycerone phosphate from D-glucose: step 1/4. Hexokinase is an allosteric enzyme inhibited by its product D-glucose 6-phosphate. Hexokinase activity is inhibited by N-acetyl-D-glucosamine. Catalyzes the phosphorylation of various hexoses, such as D-glucose, D-glucosamine, D-fructose, D-mannose and 2-deoxy-D-glucose, to hexose 6-phosphate (D-glucose 6-phosphate, D-glucosamine 6-phosphate, D-fructose 6-phosphate, D-mannose 6-phosphate and 2-deoxy-D-glucose 6-phosphate, respectively). Does not phosphorylate N-acetyl-D-glucosamine. Mediates the initial step of glycolysis by catalyzing phosphorylation of D-glucose to D-glucose 6-phosphate. Involved in innate immunity and inflammation by acting as a pattern recognition receptor for bacterial peptidoglycan. When released in the cytosol, N-acetyl-D-glucosamine component of bacterial peptidoglycan inhibits the hexokinase activity of HK1 and causes its dissociation from mitochondrial outer membrane, thereby activating the NLRP3 inflammasome. The protein is Hexokinase-1 of Pongo abelii (Sumatran orangutan).